The following is a 491-amino-acid chain: Katanin p60 ATPase-containing subunit A1 (491 aa).

The segment at 1–29 (MSLLMITENVKLAREYALLGNYDSAMVYY) is interaction with KATNB1. The interval 1–75 (MSLLMITENV…VKEIMKTLES (75 aa)) is interaction with dynein and NDEL1. The interaction with microtubules stretch occupies residues 1–185 (MSLLMITENV…EPEANKFDST (185 aa)). Serine 42 carries the post-translational modification Phosphoserine; by DYRK2. The disordered stretch occupies residues 87-183 (QHELPSSEGE…VTEPEANKFD (97 aa)). Basic and acidic residues predominate over residues 145–169 (HSDRGKAVRSREKKEQSKGREEKNK). 249-256 (GPPGTGKT) is a binding site for ATP.

It belongs to the AAA ATPase family. Katanin p60 subunit A1 subfamily. Can homooligomerize into hexameric rings, which may be promoted by interaction with microtubules. Interacts with KATNB1, which may serve as a targeting subunit. Interacts with ASPM; the katanin complex formation KATNA1:KATNB1 is required for the association of ASPM. Interacts with dynein and NDEL1. Associates with the E3 ligase complex containing DYRK2, EDD/UBR5, DDB1 and DCAF1 proteins (EDVP complex). Interacts with KLHL42 (via the kelch domains). Interacts with CUL3; the interaction is enhanced by KLHL42. Interacts with KATNB1 and KATNBL1. Post-translationally, phosphorylation by DYRK2 triggers ubiquitination and subsequent degradation. In terms of processing, ubiquitinated by the BCR(KLHL42) E3 ubiquitin ligase complex, leading to its proteasomal degradation. Ubiquitinated by the EDVP E3 ligase complex and subsequently targeted for proteasomal degradation.

The protein localises to the cytoplasm. It localises to the midbody. It is found in the cytoskeleton. The protein resides in the microtubule organizing center. Its subcellular location is the centrosome. The protein localises to the spindle pole. It localises to the spindle. The catalysed reaction is n ATP + n H2O + a microtubule = n ADP + n phosphate + (n+1) alpha/beta tubulin heterodimers.. ATPase activity is stimulated by microtubules, which promote homooligomerization. ATP-dependent microtubule severing is stimulated by interaction with KATNB1. Catalytic subunit of a complex which severs microtubules in an ATP-dependent manner. Microtubule severing may promote rapid reorganization of cellular microtubule arrays and the release of microtubules from the centrosome following nucleation. Microtubule release from the mitotic spindle poles may allow depolymerization of the microtubule end proximal to the spindle pole, leading to poleward microtubule flux and poleward motion of chromosome. Microtubule release within the cell body of neurons may be required for their transport into neuronal processes by microtubule-dependent motor proteins. This transport is required for axonal growth. In Rattus norvegicus (Rat), this protein is Katanin p60 ATPase-containing subunit A1 (Katna1).